Consider the following 150-residue polypeptide: Keratin-associated protein 15-1 (150 aa).

It belongs to the PMG family. In terms of assembly, interacts with hair keratins. Expressed at high levels in skin and at lower levels in the developing mammary gland.

In the hair cortex, hair keratin intermediate filaments are embedded in an interfilamentous matrix, consisting of hair keratin-associated proteins (KRTAP), which are essential for the formation of a rigid and resistant hair shaft through their extensive disulfide bond cross-linking with abundant cysteine residues of hair keratins. The matrix proteins include the high-sulfur and high-glycine-tyrosine keratins. This chain is Keratin-associated protein 15-1, found in Mus musculus (Mouse).